The chain runs to 130 residues: Small ribosomal subunit protein bS6 (130 aa).

Residues 96 to 130 (VTEASPMAKARDERDSRRSPSDDRIEEESAEENAE) are disordered. A compositionally biased stretch (basic and acidic residues) spans 104–118 (KARDERDSRRSPSDD). The span at 119 to 130 (RIEEESAEENAE) shows a compositional bias: acidic residues.

It belongs to the bacterial ribosomal protein bS6 family.

Functionally, binds together with bS18 to 16S ribosomal RNA. This is Small ribosomal subunit protein bS6 from Shewanella denitrificans (strain OS217 / ATCC BAA-1090 / DSM 15013).